Here is a 265-residue protein sequence, read N- to C-terminus: Hydroxyethylthiazole kinase (265 aa).

Position 50 (Met-50) interacts with substrate. The ATP site is built by Arg-125 and Thr-171. A substrate-binding site is contributed by Gly-198.

Belongs to the Thz kinase family. Requires Mg(2+) as cofactor.

The enzyme catalyses 5-(2-hydroxyethyl)-4-methylthiazole + ATP = 4-methyl-5-(2-phosphooxyethyl)-thiazole + ADP + H(+). Its pathway is cofactor biosynthesis; thiamine diphosphate biosynthesis; 4-methyl-5-(2-phosphoethyl)-thiazole from 5-(2-hydroxyethyl)-4-methylthiazole: step 1/1. Catalyzes the phosphorylation of the hydroxyl group of 4-methyl-5-beta-hydroxyethylthiazole (THZ). The polypeptide is Hydroxyethylthiazole kinase (Salmonella newport (strain SL254)).